The chain runs to 676 residues: UvrABC system protein B (676 aa).

A Helicase ATP-binding domain is found at 39 to 424 (RGILDGIPSQ…RGHIIEQIIR (386 aa)). 52 to 59 (GTTGSGKT) is a binding site for ATP. Positions 105 to 128 (YYDYYQPEAYIARSDTYIEKSLLI) match the Beta-hairpin motif. In terms of domain architecture, Helicase C-terminal spans 441 to 604 (QIDDLLEEIR…ITPKPIIKPI (164 aa)). The disordered stretch occupies residues 611-631 (KEGAQEDSRPETQSTEDLESS). A UVR domain is found at 629 to 664 (ESSIKQYEEAMYKAAQDFQFDEAAKYRDLMNAAKRQ).

This sequence belongs to the UvrB family. In terms of assembly, forms a heterotetramer with UvrA during the search for lesions. Interacts with UvrC in an incision complex.

It localises to the cytoplasm. The UvrABC repair system catalyzes the recognition and processing of DNA lesions. A damage recognition complex composed of 2 UvrA and 2 UvrB subunits scans DNA for abnormalities. Upon binding of the UvrA(2)B(2) complex to a putative damaged site, the DNA wraps around one UvrB monomer. DNA wrap is dependent on ATP binding by UvrB and probably causes local melting of the DNA helix, facilitating insertion of UvrB beta-hairpin between the DNA strands. Then UvrB probes one DNA strand for the presence of a lesion. If a lesion is found the UvrA subunits dissociate and the UvrB-DNA preincision complex is formed. This complex is subsequently bound by UvrC and the second UvrB is released. If no lesion is found, the DNA wraps around the other UvrB subunit that will check the other stand for damage. In Chlamydia muridarum (strain MoPn / Nigg), this protein is UvrABC system protein B.